The sequence spans 491 residues: Probable cytosol aminopeptidase (491 aa).

Mn(2+) contacts are provided by K261 and D266. K273 is an active-site residue. Residues D284, D343, and E345 each coordinate Mn(2+). R347 is an active-site residue.

This sequence belongs to the peptidase M17 family. Mn(2+) is required as a cofactor.

Its subcellular location is the cytoplasm. The enzyme catalyses Release of an N-terminal amino acid, Xaa-|-Yaa-, in which Xaa is preferably Leu, but may be other amino acids including Pro although not Arg or Lys, and Yaa may be Pro. Amino acid amides and methyl esters are also readily hydrolyzed, but rates on arylamides are exceedingly low.. The catalysed reaction is Release of an N-terminal amino acid, preferentially leucine, but not glutamic or aspartic acids.. Functionally, presumably involved in the processing and regular turnover of intracellular proteins. Catalyzes the removal of unsubstituted N-terminal amino acids from various peptides. In Geobacter sp. (strain M21), this protein is Probable cytosol aminopeptidase.